The chain runs to 606 residues: NADH-ubiquinone oxidoreductase chain 5 (606 aa).

The next 16 membrane-spanning stretches (helical) occupy residues 1 to 21, 43 to 63, 88 to 108, 117 to 137, 140 to 160, 171 to 191, 209 to 229, 241 to 261, 273 to 293, 310 to 330, 366 to 386, 413 to 433, 457 to 477, 488 to 508, 513 to 533, and 582 to 602; these read MNLFTPLMLTAMFILLLPIIM, AFIISMIPTMMFISSGQEAII, IFIPVALFVTWSIMEFSMWYM, FFKYLLMFLITMMILVTANNL, LFIGWEGVGIMSFLLIGWWYG, AILYNRIGDVGFIMAMAWFLT, LNIPLLGLLLAATGKSAQFGL, TPVSALLHSSTMVVAGVFLLI, MQTLTLCLGAITTLFTAICAL, LGLMIVTIGINQPYLAFLHIC, MPFTTTSLIIGSLALTGMPFL, LIATSLTAAYSTRIMFFVLLG, LLIGSIFAGYLISYNIPPTTI, LTALAVTIAGFILALELNLAA, FMYPSNLFKFSNLLGYFPIVM, and GLVKLYFLSFMITLALSLILL.

This sequence belongs to the complex I subunit 5 family. In terms of assembly, core subunit of respiratory chain NADH dehydrogenase (Complex I) which is composed of 45 different subunits.

The protein resides in the mitochondrion inner membrane. It catalyses the reaction a ubiquinone + NADH + 5 H(+)(in) = a ubiquinol + NAD(+) + 4 H(+)(out). Core subunit of the mitochondrial membrane respiratory chain NADH dehydrogenase (Complex I) which catalyzes electron transfer from NADH through the respiratory chain, using ubiquinone as an electron acceptor. Essential for the catalytic activity and assembly of complex I. This chain is NADH-ubiquinone oxidoreductase chain 5 (MT-ND5), found in Felis catus (Cat).